A 294-amino-acid chain; its full sequence is Ribosomal RNA small subunit methyltransferase A (294 aa).

Asn-31, Leu-33, Gly-58, Glu-79, Asp-104, and Asn-129 together coordinate S-adenosyl-L-methionine.

Belongs to the class I-like SAM-binding methyltransferase superfamily. rRNA adenine N(6)-methyltransferase family. RsmA subfamily.

It localises to the cytoplasm. It catalyses the reaction adenosine(1518)/adenosine(1519) in 16S rRNA + 4 S-adenosyl-L-methionine = N(6)-dimethyladenosine(1518)/N(6)-dimethyladenosine(1519) in 16S rRNA + 4 S-adenosyl-L-homocysteine + 4 H(+). Its function is as follows. Specifically dimethylates two adjacent adenosines (A1518 and A1519) in the loop of a conserved hairpin near the 3'-end of 16S rRNA in the 30S particle. May play a critical role in biogenesis of 30S subunits. The sequence is that of Ribosomal RNA small subunit methyltransferase A from Oceanobacillus iheyensis (strain DSM 14371 / CIP 107618 / JCM 11309 / KCTC 3954 / HTE831).